A 71-amino-acid chain; its full sequence is Metallothionein-like protein 1 (71 aa).

The protein belongs to the metallothionein superfamily. Type 15 family.

Functionally, metallothioneins have a high content of cysteine residues that bind various heavy metals. The chain is Metallothionein-like protein 1 (MT1) from Casuarina glauca (Swamp oak).